We begin with the raw amino-acid sequence, 303 residues long: Methionyl-tRNA formyltransferase (303 aa).

108–111 contacts (6S)-5,6,7,8-tetrahydrofolate; sequence SDLP.

It belongs to the Fmt family.

It carries out the reaction L-methionyl-tRNA(fMet) + (6R)-10-formyltetrahydrofolate = N-formyl-L-methionyl-tRNA(fMet) + (6S)-5,6,7,8-tetrahydrofolate + H(+). Its function is as follows. Attaches a formyl group to the free amino group of methionyl-tRNA(fMet). The formyl group appears to play a dual role in the initiator identity of N-formylmethionyl-tRNA by promoting its recognition by IF2 and preventing the misappropriation of this tRNA by the elongation apparatus. The polypeptide is Methionyl-tRNA formyltransferase (Rickettsia prowazekii (strain Madrid E)).